A 335-amino-acid polypeptide reads, in one-letter code: Glutamyl-tRNA reductase (335 aa).

Substrate contacts are provided by residues 60–63 (TCHR), Ser110, 115–117 (ETE), and Gln121. Cys61 functions as the Nucleophile in the catalytic mechanism. NADP(+) is bound at residue 189–194 (GYSEIN).

Belongs to the glutamyl-tRNA reductase family. In terms of assembly, homodimer.

The catalysed reaction is (S)-4-amino-5-oxopentanoate + tRNA(Glu) + NADP(+) = L-glutamyl-tRNA(Glu) + NADPH + H(+). The protein operates within porphyrin-containing compound metabolism; protoporphyrin-IX biosynthesis; 5-aminolevulinate from L-glutamyl-tRNA(Glu): step 1/2. Catalyzes the NADPH-dependent reduction of glutamyl-tRNA(Glu) to glutamate 1-semialdehyde (GSA). The polypeptide is Glutamyl-tRNA reductase (Chlamydia trachomatis serovar D (strain ATCC VR-885 / DSM 19411 / UW-3/Cx)).